A 71-amino-acid chain; its full sequence is UPF0352 protein Ssed_1809 (71 aa).

Belongs to the UPF0352 family.

The chain is UPF0352 protein Ssed_1809 from Shewanella sediminis (strain HAW-EB3).